Consider the following 471-residue polypeptide: MVKAIASLMLLHIWAIEEIKAERQAPSVSRTECTTPCRCAQRLEKLKKHCQMRVQTAVRKQKENGKLAQKLLIGTITSTAGGGEQTSTTSFLLSNSSPTRRETLETNQAEIMSQLEHIIAMEAQYYAILNVSATSTDTTLDGDGTQYNTGSITSGGFTVSKTTECNTESPEDTKEPDQTTLSKKQGLKDLKLALRVKVACKNGGGACSAASSSDKIHITNETDSKNKGTTASTMNSQNTAVAFATDLQIVNWKSDHIDSNITALANALTALDSIPDLTDPAAYTADAAFKQLVATVTLNKPPTTELTGEVLDAVNRACADNYGTSASELTTKIWDPLNEQAASYYSDKTIKTDQLKLLTSNQQLTTALGVALAKAINVKEASKKECNLHGHETDATCEAKGVGDNCKPPCKEVEEGGKKKCKLDKEEAKRVAEQAATNQETEGKDGKTTNTTGSNSFLINKAPVLLAFLLL.

The N-terminal stretch at 1-21 (MVKAIASLMLLHIWAIEEIKA) is a signal peptide. N-linked (GlcNAc...) asparagine glycosylation occurs at N130. The span at 158–168 (TVSKTTECNTE) shows a compositional bias: polar residues. 2 disordered regions span residues 158–183 (TVSKTTECNTESPEDTKEPDQTTLSK) and 204–232 (GGACSAASSSDKIHITNETDSKNKGTTAS). The span at 214–226 (DKIHITNETDSKN) shows a compositional bias: basic and acidic residues. Residues N220 and N260 are each glycosylated (N-linked (GlcNAc...) asparagine). Disulfide bonds link C397–C410 and C406–C421. A disordered region spans residues 432-454 (AEQAATNQETEGKDGKTTNTTGS). N450 carries N-linked (GlcNAc...) asparagine glycosylation. S454 carries the GPI-anchor amidated serine lipid modification. Positions 455 to 471 (NSFLINKAPVLLAFLLL) are cleaved as a propeptide — removed in mature form.

It is found in the cell membrane. Functionally, VSG forms a coat on the surface of the parasite. The trypanosome evades the immune response of the host by expressing a series of antigenically distinct VSGs from an estimated 1000 VSG genes. The sequence is that of Variant surface glycoprotein ILTAT 1.1BC from Trypanosoma brucei brucei.